The primary structure comprises 445 residues: GTPase Der (445 aa).

2 consecutive EngA-type G domains span residues Pro-3 to Gln-167 and Ile-180 to Met-353. Residues Gly-9–Ser-16, Asp-56–Phe-60, Asn-119–Glu-122, Gly-186–Ser-193, Asp-233–Leu-237, and Asn-298–Asp-301 contribute to the GTP site. Residues Ser-354–Asn-438 enclose the KH-like domain.

Belongs to the TRAFAC class TrmE-Era-EngA-EngB-Septin-like GTPase superfamily. EngA (Der) GTPase family. Associates with the 50S ribosomal subunit.

Its function is as follows. GTPase that plays an essential role in the late steps of ribosome biogenesis. The sequence is that of GTPase Der from Burkholderia cenocepacia (strain ATCC BAA-245 / DSM 16553 / LMG 16656 / NCTC 13227 / J2315 / CF5610) (Burkholderia cepacia (strain J2315)).